We begin with the raw amino-acid sequence, 430 residues long: Enolase (430 aa).

Residue glutamine 162 participates in (2R)-2-phosphoglycerate binding. Residue glutamate 204 is the Proton donor of the active site. 3 residues coordinate Mg(2+): aspartate 242, glutamate 289, and aspartate 316. Residues lysine 341, arginine 370, serine 371, and lysine 392 each contribute to the (2R)-2-phosphoglycerate site. The active-site Proton acceptor is the lysine 341.

This sequence belongs to the enolase family. Mg(2+) is required as a cofactor.

Its subcellular location is the cytoplasm. The protein localises to the secreted. It localises to the cell surface. It catalyses the reaction (2R)-2-phosphoglycerate = phosphoenolpyruvate + H2O. It participates in carbohydrate degradation; glycolysis; pyruvate from D-glyceraldehyde 3-phosphate: step 4/5. In terms of biological role, catalyzes the reversible conversion of 2-phosphoglycerate (2-PG) into phosphoenolpyruvate (PEP). It is essential for the degradation of carbohydrates via glycolysis. This Flavobacterium johnsoniae (strain ATCC 17061 / DSM 2064 / JCM 8514 / BCRC 14874 / CCUG 350202 / NBRC 14942 / NCIMB 11054 / UW101) (Cytophaga johnsonae) protein is Enolase.